Consider the following 295-residue polypeptide: Methionine aminopeptidase (295 aa).

Residue His63 coordinates substrate. Positions 83, 94, and 154 each coordinate a divalent metal cation. A substrate-binding site is contributed by His162. A divalent metal cation contacts are provided by Glu188 and Glu281.

The protein belongs to the peptidase M24A family. Methionine aminopeptidase archaeal type 2 subfamily. As to quaternary structure, monomer. It depends on Co(2+) as a cofactor. Requires Zn(2+) as cofactor. Mn(2+) is required as a cofactor. Fe(2+) serves as cofactor.

The enzyme catalyses Release of N-terminal amino acids, preferentially methionine, from peptides and arylamides.. Removes the N-terminal methionine from nascent proteins. The N-terminal methionine is often cleaved when the second residue in the primary sequence is small and uncharged (Met-Ala-, Cys, Gly, Pro, Ser, Thr, or Val). This Thermococcus kodakarensis (strain ATCC BAA-918 / JCM 12380 / KOD1) (Pyrococcus kodakaraensis (strain KOD1)) protein is Methionine aminopeptidase.